The sequence spans 261 residues: NAD-capped RNA hydrolase NudC (261 aa).

Residues Lys-25 and Arg-69 each contribute to the substrate site. Residues Cys-98 and Cys-101 each contribute to the Zn(2+) site. Glu-111 is a binding site for substrate. Zn(2+) is bound by residues Cys-116 and Cys-119. Tyr-124 is a substrate binding site. The region spanning 125–248 is the Nudix hydrolase domain; that stretch reads PQIAPCVIVA…TVARRLIEDT (124 aa). Ala-158, Glu-174, and Glu-178 together coordinate a divalent metal cation. The short motif at 159–180 is the Nudix box element; that stretch reads GFVEVGETLEQAVSREVLEESN. 192–199 is a binding site for substrate; that stretch reads QPWPFPHS. Residue Glu-219 coordinates a divalent metal cation. Ala-241 contacts substrate.

Belongs to the Nudix hydrolase family. NudC subfamily. Homodimer. The cofactor is Mg(2+). Mn(2+) serves as cofactor. Requires Zn(2+) as cofactor.

The catalysed reaction is a 5'-end NAD(+)-phospho-ribonucleoside in mRNA + H2O = a 5'-end phospho-adenosine-phospho-ribonucleoside in mRNA + beta-nicotinamide D-ribonucleotide + 2 H(+). The enzyme catalyses NAD(+) + H2O = beta-nicotinamide D-ribonucleotide + AMP + 2 H(+). It catalyses the reaction NADH + H2O = reduced beta-nicotinamide D-ribonucleotide + AMP + 2 H(+). Its function is as follows. mRNA decapping enzyme that specifically removes the nicotinamide adenine dinucleotide (NAD) cap from a subset of mRNAs by hydrolyzing the diphosphate linkage to produce nicotinamide mononucleotide (NMN) and 5' monophosphate mRNA. The NAD-cap is present at the 5'-end of some mRNAs and stabilizes RNA against 5'-processing. Has preference for mRNAs with a 5'-end purine. Catalyzes the hydrolysis of a broad range of dinucleotide pyrophosphates. This is NAD-capped RNA hydrolase NudC from Yersinia enterocolitica serotype O:8 / biotype 1B (strain NCTC 13174 / 8081).